A 226-amino-acid polypeptide reads, in one-letter code: Transcriptional activator plp-1 (226 aa).

Belongs to the PUR DNA-binding protein family.

The protein localises to the nucleus. The protein resides in the chromosome. Its function is as follows. Probable transcription activator. Binds telomeric DNA containing repeats of the sequence, 5'-TTAGGC-3'. Binds to end-1 promoter, activating end-1 expression, which is required for endoderm specification during embryonic development. In Caenorhabditis elegans, this protein is Transcriptional activator plp-1.